Reading from the N-terminus, the 473-residue chain is Cytochrome c-552 (473 aa).

Residues 1–33 (MQHGDEMMKKMTGKSFALSALVAASFMAAGAMA) form the signal peptide. His93 serves as a coordination point for heme c. Residues Cys121, Cys124, and Lys125 each contribute to the heme site. Residues Cys159, Cys162, His163, Cys201, Cys204, and His205 each coordinate heme c. The Ca(2+) site is built by Glu207, Tyr208, Lys256, and Gln258. Tyr208 is a binding site for substrate. His259 is a substrate binding site. Positions 270, 277, 280, 281, 296, 309, 312, 313, and 388 each coordinate heme c.

It belongs to the cytochrome c-552 family. Ca(2+) is required as a cofactor. Heme c serves as cofactor.

Its subcellular location is the periplasm. The catalysed reaction is 6 Fe(III)-[cytochrome c] + NH4(+) + 2 H2O = 6 Fe(II)-[cytochrome c] + nitrite + 8 H(+). Its pathway is nitrogen metabolism; nitrate reduction (assimilation). In terms of biological role, catalyzes the reduction of nitrite to ammonia, consuming six electrons in the process. The sequence is that of Cytochrome c-552 from Shewanella sp. (strain ANA-3).